The chain runs to 512 residues: Perphorin-1 (512 aa).

Positions Met-1–Ala-18 are cleaved as a signal peptide. N-linked (GlcNAc...) asparagine glycans are attached at residues Asn-49, Asn-96, Asn-118, Asn-378, Asn-381, Asn-403, and Asn-476.

Its subcellular location is the secreted. The protein localises to the extracellular space. It localises to the extracellular matrix. Its function is as follows. May be involved in conversion of asexual males and females to the sexual pathway. The polypeptide is Perphorin-1 (Volvox carteri (Green alga)).